A 589-amino-acid polypeptide reads, in one-letter code: Complement component C8 beta chain (589 aa).

Residues 1–31 (MKIGAQVWRALAKSCLLCATLGCLHFPGSRG) form the signal peptide. Positions 32 to 53 (GKPDFFETKAVNGSLVKSRPVR) are excised as a propeptide. An N-linked (GlcNAc...) asparagine glycan is attached at Asn43. The 54-residue stretch at 63–116 (DCELSTWSSWTACDPCQKKRYRHTYLLRPSQFYGELCDLSDKEVEDCVTNQPCR) folds into the TSP type-1 1 domain. Cystine bridges form between Cys64/Cys99, Cys75/Cys109, Cys78/Cys115, Cys121/Cys132, Cys126/Cys145, Cys139/Cys154, and Cys161/Cys199. Residues Trp69 and Trp72 are each glycosylated (C-linked (Man) tryptophan). The 36-residue stretch at 120–155 (RCEGFVCAQTGRCVNRRLLCNGDNDCGDQSDEANCR) folds into the LDL-receptor class A domain. Positions 137, 140, 142, 144, 150, and 151 each coordinate Ca(2+). One can recognise an MACPF domain in the interval 157 to 503 (IYKNCQREME…EFQSEVSSCR (347 aa)). 8 consecutive transmembrane segments (beta stranded) span residues 201–206 (PHYILD), 209–213 (FRKPY), 251–258 (FNFTSGFK), 261–268 (GVMDLGIK), 328–335 (SYGEYRDL), 338–343 (DFGTHF), 378–385 (AGGSFGIG), and 391–398 (VYVKVGVS). An intrachain disulfide couples Cys377 to Cys402. Residues 404–534 (DIMKEINERN…PGGFQGTACE (131 aa)) enclose the EGF-like domain. Phosphothreonine is present on Thr417. Intrachain disulfides connect Cys502/Cys549, Cys504/Cys520, Cys507/Cys522, and Cys524/Cys533. The TSP type-1 2 domain occupies 544–587 (DGKWSCWSDWSACSGGHKTRHRQCNNPAPHKGGSPCSGPASETL). Residues Trp550 and Trp553 are each glycosylated (C-linked (Man) tryptophan). Cys556 and Cys589 are disulfide-bonded. Residues 570 to 589 (PAPHKGGSPCSGPASETLNC) are disordered.

This sequence belongs to the complement C6/C7/C8/C9 family. As to quaternary structure, heterotrimer of 3 chains: alpha (C8A), beta (C8B) and gamma (C8G); the alpha and gamma chains are disulfide bonded. Component of the membrane attack complex (MAC), composed of complement C5b, C6, C7, C8A, C8B, C8G and multiple copies of the pore-forming subunit C9. N-glycosylated; contains one or two bound glycans. Not O-glycosylated.

The protein localises to the secreted. Its subcellular location is the target cell membrane. Membrane attack complex (MAC) assembly is inhibited by CD59, thereby protecting self-cells from damage during complement activation. CD59 acts by binding to the beta-haipins of C8 (C8A and C8B), forming an intermolecular beta-sheet that prevents incorporation of the multiple copies of C9 required for complete formation of the osmolytic pore. MAC assembly is also inhibited by clusterin (CLU) chaperones that inhibit polymerization of C9. In terms of biological role, component of the membrane attack complex (MAC), a multiprotein complex activated by the complement cascade, which inserts into a target cell membrane and forms a pore, leading to target cell membrane rupture and cell lysis. The MAC is initiated by proteolytic cleavage of C5 into complement C5b in response to the classical, alternative, lectin and GZMK complement pathways. The complement pathways consist in a cascade of proteins that leads to phagocytosis and breakdown of pathogens and signaling that strengthens the adaptive immune system. C8B, together with C8A and C8G, inserts into the target membrane, but does not form pores by itself. During MAC assembly, associates with C5b, C6 and C7 to form the C5b8 intermediate complex that inserts into the target membrane and traverses the bilayer increasing membrane rigidity. This Mus musculus (Mouse) protein is Complement component C8 beta chain (C8b).